A 600-amino-acid polypeptide reads, in one-letter code: Calcium/calmodulin-dependent serine/threonine-protein kinase 1 (600 aa).

The segment at 1-99 is disordered; it reads MGLCHGKSAA…GGFKRPFPPP (99 aa). Residues 24–56 show a composition bias toward low complexity; sequence TRVAEAAAAPAKPASPAPSAAAAAAAPAKPGTP. Polar residues predominate over residues 74 to 85; the sequence is YKGSPANSSVAS. The region spanning 147–409 is the Protein kinase domain; that stretch reads YELGREVGRG…AAQALCHPWI (263 aa). ATP-binding positions include 153 to 161 and Lys-179; that span reads VGRGHFGYT. The Proton acceptor role is filled by Asp-275.

Belongs to the protein kinase superfamily. Ser/Thr protein kinase family. In terms of processing, autophosphorylated. In terms of tissue distribution, highly expressed in roots in the zone of cell division. Expressed in leaf mesophyll cells and at lower levels in mature stems.

The enzyme catalyses L-seryl-[protein] + ATP = O-phospho-L-seryl-[protein] + ADP + H(+). It carries out the reaction L-threonyl-[protein] + ATP = O-phospho-L-threonyl-[protein] + ADP + H(+). Its activity is regulated as follows. Activated by the binding of calmodulin-like protein 1 (CML1) in the presence of Ca(2+). Functionally, possesses kinase activity in vitro. This is Calcium/calmodulin-dependent serine/threonine-protein kinase 1 (CAMK1) from Oryza sativa subsp. japonica (Rice).